The primary structure comprises 458 residues: Argininosuccinate lyase (458 aa).

The protein belongs to the lyase 1 family. Argininosuccinate lyase subfamily.

Its subcellular location is the cytoplasm. The enzyme catalyses 2-(N(omega)-L-arginino)succinate = fumarate + L-arginine. It participates in amino-acid biosynthesis; L-arginine biosynthesis; L-arginine from L-ornithine and carbamoyl phosphate: step 3/3. The polypeptide is Argininosuccinate lyase (Hydrogenobaculum sp. (strain Y04AAS1)).